We begin with the raw amino-acid sequence, 160 residues long: Cyanate hydratase (160 aa).

Catalysis depends on residues Arg100, Glu103, and Ser126.

The protein belongs to the cyanase family.

It carries out the reaction cyanate + hydrogencarbonate + 3 H(+) = NH4(+) + 2 CO2. Functionally, catalyzes the reaction of cyanate with bicarbonate to produce ammonia and carbon dioxide. In Penicillium rubens (strain ATCC 28089 / DSM 1075 / NRRL 1951 / Wisconsin 54-1255) (Penicillium chrysogenum), this protein is Cyanate hydratase.